The chain runs to 49 residues: MKLLFLNIIVVRRHLHCKSYRLSPWYIYIYGDYLLYTTEIPYKPFTRQP.

This is an uncharacterized protein from Saccharomyces cerevisiae (strain ATCC 204508 / S288c) (Baker's yeast).